The primary structure comprises 397 residues: Tryptophan synthase beta chain (397 aa).

The residue at position 87 (K87) is an N6-(pyridoxal phosphate)lysine.

The protein belongs to the TrpB family. As to quaternary structure, tetramer of two alpha and two beta chains. The cofactor is pyridoxal 5'-phosphate.

The enzyme catalyses (1S,2R)-1-C-(indol-3-yl)glycerol 3-phosphate + L-serine = D-glyceraldehyde 3-phosphate + L-tryptophan + H2O. The protein operates within amino-acid biosynthesis; L-tryptophan biosynthesis; L-tryptophan from chorismate: step 5/5. Its function is as follows. The beta subunit is responsible for the synthesis of L-tryptophan from indole and L-serine. This Escherichia coli O127:H6 (strain E2348/69 / EPEC) protein is Tryptophan synthase beta chain.